The sequence spans 283 residues: Elongation factor Ts (283 aa).

Residues 80-83 form an involved in Mg(2+) ion dislocation from EF-Tu region; the sequence is TDFV.

The protein belongs to the EF-Ts family.

It is found in the cytoplasm. In terms of biological role, associates with the EF-Tu.GDP complex and induces the exchange of GDP to GTP. It remains bound to the aminoacyl-tRNA.EF-Tu.GTP complex up to the GTP hydrolysis stage on the ribosome. In Pectobacterium carotovorum subsp. carotovorum (strain PC1), this protein is Elongation factor Ts.